The chain runs to 271 residues: Thiazole synthase (271 aa).

Residue lysine 95 is the Schiff-base intermediate with DXP of the active site. Residues glycine 156, 182-183 (AG), and 204-205 (NT) each bind 1-deoxy-D-xylulose 5-phosphate.

It belongs to the ThiG family. Homotetramer. Forms heterodimers with either ThiH or ThiS.

It is found in the cytoplasm. The catalysed reaction is [ThiS sulfur-carrier protein]-C-terminal-Gly-aminoethanethioate + 2-iminoacetate + 1-deoxy-D-xylulose 5-phosphate = [ThiS sulfur-carrier protein]-C-terminal Gly-Gly + 2-[(2R,5Z)-2-carboxy-4-methylthiazol-5(2H)-ylidene]ethyl phosphate + 2 H2O + H(+). It functions in the pathway cofactor biosynthesis; thiamine diphosphate biosynthesis. In terms of biological role, catalyzes the rearrangement of 1-deoxy-D-xylulose 5-phosphate (DXP) to produce the thiazole phosphate moiety of thiamine. Sulfur is provided by the thiocarboxylate moiety of the carrier protein ThiS. In vitro, sulfur can be provided by H(2)S. This chain is Thiazole synthase, found in Yersinia pseudotuberculosis serotype O:3 (strain YPIII).